The sequence spans 310 residues: tRNA dimethylallyltransferase (310 aa).

5–12 (GPTASGKS) contributes to the ATP binding site. 7–12 (TASGKS) serves as a coordination point for substrate. Residues 30 to 33 (DSMQ) are interaction with substrate tRNA.

It belongs to the IPP transferase family. In terms of assembly, monomer. Mg(2+) is required as a cofactor.

It carries out the reaction adenosine(37) in tRNA + dimethylallyl diphosphate = N(6)-dimethylallyladenosine(37) in tRNA + diphosphate. Its function is as follows. Catalyzes the transfer of a dimethylallyl group onto the adenine at position 37 in tRNAs that read codons beginning with uridine, leading to the formation of N6-(dimethylallyl)adenosine (i(6)A). In Rhodopseudomonas palustris (strain HaA2), this protein is tRNA dimethylallyltransferase.